The sequence spans 1254 residues: Structural polyprotein (1254 aa).

The necessary for nucleocapsid assembly and virus assembly stretch occupies residues 1 to 33 (MFPYQPMYPMQPMPFRNPFAAPRRPWFPRTDPF). The tract at residues 33-68 (FLAMQVQELARSMANLTFKQRRDVPPEGPPAKKKKK) is host transcription inhibition. Residues 41 to 48 (LARSMANL) carry the Supraphysiological nuclear export signal motif. Positions 48 to 119 (LTFKQRRDVP…KPGKRQRMVM (72 aa)) are disordered. A Nuclear localization signal motif is present at residues 64–68 (KKKKK). 2 stretches are compositionally biased toward basic residues: residues 79–93 (NGKK…KKKT) and 102–117 (GGKK…RQRM). Residues 91-126 (KKTGPPPQKTNGGKKKVNKKPGKRQRMVMKLESDKT) are binding to the viral RNA. The residue at position 93 (threonine 93) is a Phosphothreonine. The ribosome-binding stretch occupies residues 111–125 (PGKRQRMVMKLESDK). Position 123 is a phosphoserine (serine 123). One can recognise a Peptidase S3 domain in the interval 125-274 (KTFPIMLDGR…KYTPENSEQW (150 aa)). Residue threonine 126 is modified to Phosphothreonine. The Charge relay system role is filled by histidine 151. The segment at 167–172 (KKASKY) is interaction with spike glycoprotein E2. Catalysis depends on charge relay system residues aspartate 173 and serine 225. Residues 259-263 (EKGVT) form an interaction with spike glycoprotein E2 region. The interval 275–286 (SLVTTMCLLANV) is functions as an uncleaved signal peptide for the precursor of protein E3/E2. The Extracellular segment spans residues 275–700 (SLVTTMCLLA…HYYHRYPMST (426 aa)). 7 cysteine pairs are disulfide-bonded: cysteine 281–cysteine 290, cysteine 352–cysteine 456, cysteine 355–cysteine 360, cysteine 423–cysteine 437, cysteine 484–cysteine 599, cysteine 533–cysteine 559, and cysteine 535–cysteine 553. The N-linked (GlcNAc...) asparagine; by host glycan is linked to asparagine 285. The N-linked (GlcNAc...) asparagine; by host glycan is linked to asparagine 651. The helical transmembrane segment at 701–721 (ILGLSICAAIVTTSIAASVWL) threads the bilayer. Residues 722-756 (FCKSRISCLTPYRLTPNARMPLCLAVLCCARTARA) lie on the Cytoplasmic side of the membrane. An interaction with the capsid protein region spans residues 724-728 (KSRIS). Residues cysteine 729, cysteine 749, and cysteine 750 are each lipidated (S-palmitoyl cysteine; by host). A transient transmembrane before p62-6K protein processing region spans residues 729 to 749 (CLTPYRLTPNARMPLCLAVLC). Cysteine 729 and cysteine 750 form a disulfide bridge. The Extracellular portion of the chain corresponds to 757 to 771 (ETTWESLDHLWNHNQ). The next 2 membrane-spanning stretches (helical) occupy residues 772 to 790 (QMFW…VATR) and 791 to 811 (LLKC…VGAG). Over 812-1224 (AYEHATTMPN…SKTAWTWLTS (413 aa)) the chain is Extracellular. Cystine bridges form between cysteine 861-cysteine 926, cysteine 874-cysteine 906, cysteine 875-cysteine 908, and cysteine 880-cysteine 890. An E1 fusion peptide loop region spans residues 896-913 (VYPFMWGGAYCFCDTENT). Residues asparagine 946 and asparagine 1082 are each glycosylated (N-linked (GlcNAc...) asparagine; by host). Intrachain disulfides connect cysteine 1071–cysteine 1083, cysteine 1113–cysteine 1188, cysteine 1118–cysteine 1192, and cysteine 1140–cysteine 1182. Residues 1225–1245 (LLGGSAIIIIIGLVLATIVAM) form a helical membrane-spanning segment. Over 1246 to 1254 (YVLTNQKHN) the chain is Cytoplasmic.

In terms of assembly, homodimer. Homomultimer. Interacts with host karyopherin KPNA4; this interaction allows the nuclear import of the viral capsid protein. Interacts with spike glycoprotein E2. Interacts with host IRAK1; the interaction leads to inhibition of IRAK1-dependent signaling. Part of a tetrameric complex composed of host CRM1, host importin alpha/beta dimer and the viral capsid; this complex blocks the receptor-mediated transport through the nuclear pore. Interacts with host phosphatase PPP1CA; this interaction dephosphorylates the capsid protein, which increases its ability to bind to the viral genome. As to quaternary structure, the precursor of protein E3/E2 and E1 form a heterodimer shortly after synthesis. Interacts with spike glycoprotein E2. The precursor of protein E3/E2 and E1 form a heterodimer shortly after synthesis. Processing of the precursor of protein E3/E2 into E2 and E3 results in a heterodimer of the spike glycoproteins E2 and E1. Spike at virion surface are constituted of three E2-E1 heterodimers. After target cell attachment and endocytosis, E1 change conformation to form homotrimers. Interacts with 6K protein. Interacts with host LDLRAD3; this interaction mediates viral entry to the host cell. In terms of assembly, interacts with spike glycoprotein E1. Processing of the precursor of protein E3/E2 into E2 and E3 results in a heterodimer of the spike glycoproteins E2 and E1. Spike at virion surface are constituted of a trimer of E2-E1 heterodimers. Interacts with 6K protein. Interacts with host LDLRAD3; this interaction mediates viral entry to the host cell. As to quaternary structure, oligomer. Interacts with spike glycoprotein E1. Interacts with spike glycoprotein E2. In terms of processing, structural polyprotein: Specific enzymatic cleavages in vivo yield mature proteins. Capsid protein is auto-cleaved during polyprotein translation, unmasking a signal peptide at the N-terminus of the precursor of E3/E2. The remaining polyprotein is then targeted to the host endoplasmic reticulum, where host signal peptidase cleaves it into pE2, 6K and E1 proteins. pE2 is further processed to mature E3 and E2 by host furin in trans-Golgi vesicle. Post-translationally, phosphorylated on serine and threonine residues. Palmitoylated via thioester bonds. These palmitoylations may induce disruption of the C-terminus transmembrane. This would result in the reorientation of E2 C-terminus from lumenal to cytoplasmic side. In terms of processing, N-glycosylated. Post-translationally, palmitoylated via thioester bonds.

The protein resides in the virion. It is found in the host cytoplasm. It localises to the host cell membrane. The protein localises to the host nucleus. Its subcellular location is the virion membrane. The protein resides in the host Golgi apparatus. It is found in the host trans-Golgi network. It localises to the host endoplasmic reticulum. The enzyme catalyses Autocatalytic release of the core protein from the N-terminus of the togavirus structural polyprotein by hydrolysis of a -Trp-|-Ser- bond.. Functionally, forms an icosahedral capsid with a T=4 symmetry composed of 240 copies of the capsid protein surrounded by a lipid membrane through which penetrate 80 spikes composed of trimers of E1-E2 heterodimers. The capsid protein binds to the viral RNA genome at a site adjacent to a ribosome binding site for viral genome translation following genome release. Possesses a protease activity that results in its autocatalytic cleavage from the nascent structural protein. Following its self-cleavage, the capsid protein transiently associates with ribosomes, and within several minutes the protein binds to viral RNA and rapidly assembles into icosahedric core particles. The resulting nucleocapsid eventually associates with the cytoplasmic domain of the spike glycoprotein E2 at the cell membrane, leading to budding and formation of mature virions. In case of infection, new virions attach to target cells and after clathrin-mediated endocytosis their membrane fuses with the host endosomal membrane. This leads to the release of the nucleocapsid into the cytoplasm, followed by an uncoating event necessary for the genomic RNA to become accessible. The uncoating might be triggered by the interaction of capsid proteins with ribosomes. Binding of ribosomes would release the genomic RNA since the same region is genomic RNA-binding and ribosome-binding. Specifically inhibits interleukin-1 receptor-associated kinase 1/IRAK1-dependent signaling during viral entry, representing a means by which the alphaviruses may evade innate immune detection and activation prior to viral gene expression. Inhibits host transcription. Forms a tetrameric complex with XPO1/CRM1 and the nuclear import receptor importin. This complex blocks the central channel of host nuclear pores thereby inhibiting the receptor-mediated nuclear transport and thus the host mRNA and rRNA transcription. The inhibition of transcription is linked to a cytopathic effect on the host cell. Its function is as follows. Provides the signal sequence for the translocation of the precursor of protein E3/E2 to the host endoplasmic reticulum. Furin-cleaved E3 remains associated with spike glycoprotein E1 and mediates pH protection of the latter during the transport via the secretory pathway. After virion release from the host cell, the assembly protein E3 is gradually released in the extracellular space. Plays a role in viral attachment to target host cell, by binding to the cell receptor LDLRAD3. Synthesized as a p62 precursor which is processed by furin at the cell membrane just before virion budding, giving rise to E2-E1 heterodimer. The p62-E1 heterodimer is stable, whereas E2-E1 is unstable and dissociate at low pH. p62 is processed at the last step, presumably to avoid E1 fusion activation before its final export to cell surface. E2 C-terminus contains a transitory transmembrane that would be disrupted by palmitoylation, resulting in reorientation of the C-terminal tail from lumenal to cytoplasmic side. This step is critical since E2 C-terminus is involved in budding by interacting with capsid proteins. This release of E2 C-terminus in cytoplasm occurs lately in protein export, and precludes premature assembly of particles at the endoplasmic reticulum membrane. In terms of biological role, acts as a viroporin that participates in virus glycoprotein processing and transport to the plasma membrane, cell permeabilization and budding of viral particles. Disrupts the calcium homeostasis of the cell, probably at the endoplasmic reticulum level. This leads to cytoplasmic calcium elevation. Because of its lipophilic properties, the 6K protein is postulated to influence the selection of lipids that interact with the transmembrane domains of the glycoproteins, which, in turn, affects the deformability of the bilayer required for the extreme curvature that occurs as budding proceeds. Present in low amount in virions, about 3% compared to viral glycoproteins. Functionally, class II viral fusion protein. Fusion activity is inactive as long as E1 is bound to E2 in mature virion. After virus attachment to cell receptor LDLRAD3 and endocytosis, acidification of the endosome induce dissociation of E1/E2 heterodimer and concomitant trimerization of the E1 subunits. This E1 trimer is fusion active, and promotes release of viral nucleocapsid in cytoplasm after endosome and viral membrane fusion. Efficient fusion requires the presence of cholesterol and sphingolipid in the target membrane. This is Structural polyprotein from Venezuelan equine encephalitis virus (strain Mena II) (VEEV).